The primary structure comprises 62 residues: Conotoxin Pn-014 (62 aa).

The signal sequence occupies residues 1-22; the sequence is MRCLPVFVILLLLIASAPSVDA. The propeptide occupies 23 to 48; sequence RPKTKDDIPLVSFQDHAKRILQTFES. At tryptophan 61 the chain carries Tryptophan amide.

This sequence belongs to the conotoxin T superfamily. In terms of processing, contains 2 disulfide bonds that can be either 'C1-C3, C2-C4' or 'C1-C4, C2-C3', since these disulfide connectivities have been observed for conotoxins with cysteine framework V (for examples, see AC P0DQQ7 and AC P81755). As to expression, expressed by the venom duct.

The protein resides in the secreted. This is Conotoxin Pn-014 from Conus pennaceus (Feathered cone).